Here is a 319-residue protein sequence, read N- to C-terminus: Aspartate carbamoyltransferase catalytic subunit (319 aa).

Carbamoyl phosphate contacts are provided by Arg65 and Thr66. An L-aspartate-binding site is contributed by Lys93. Positions 115, 149, and 152 each coordinate carbamoyl phosphate. Arg182 and Arg237 together coordinate L-aspartate. Carbamoyl phosphate is bound by residues Gly278 and Pro279.

Belongs to the aspartate/ornithine carbamoyltransferase superfamily. ATCase family. In terms of assembly, heterododecamer (2C3:3R2) of six catalytic PyrB chains organized as two trimers (C3), and six regulatory PyrI chains organized as three dimers (R2).

It catalyses the reaction carbamoyl phosphate + L-aspartate = N-carbamoyl-L-aspartate + phosphate + H(+). It participates in pyrimidine metabolism; UMP biosynthesis via de novo pathway; (S)-dihydroorotate from bicarbonate: step 2/3. Catalyzes the condensation of carbamoyl phosphate and aspartate to form carbamoyl aspartate and inorganic phosphate, the committed step in the de novo pyrimidine nucleotide biosynthesis pathway. The protein is Aspartate carbamoyltransferase catalytic subunit of Dechloromonas aromatica (strain RCB).